We begin with the raw amino-acid sequence, 106 residues long: MIISTTSQLEGRPIAEYLGVVSSESVQGINFVRDFFTRFRDFFGGRSQTLESALREAREQATEELMARARQLQADAIVGVDFEISMPSVQGGMVVVFATGTAVRLK.

This sequence belongs to the UPF0145 family.

The protein is UPF0145 protein PputGB1_2909 of Pseudomonas putida (strain GB-1).